Consider the following 663-residue polypeptide: Polyunsaturated fatty acid lipoxygenase ALOX12 (663 aa).

Residues G2 to R114 enclose the PLAT domain. In terms of domain architecture, Lipoxygenase spans L115 to I663. S246 bears the Phosphoserine mark. Fe cation is bound by residues H360, H365, H540, N544, and I663.

Belongs to the lipoxygenase family. The cofactor is Fe cation. Found primarily in platelets and in microsomal and cytosolic fractions of the epidermis (at protein level).

It localises to the cytoplasm. The protein localises to the cytosol. The protein resides in the membrane. It catalyses the reaction (5Z,8Z,11Z,14Z)-eicosatetraenoate + O2 = (12S)-hydroperoxy-(5Z,8Z,10E,14Z)-eicosatetraenoate. It carries out the reaction (9Z,12Z)-octadecadienoate + O2 = (13S)-hydroperoxy-(9Z,11E)-octadecadienoate. The catalysed reaction is 2 leukotriene A4 + O2 + 2 H2O = 2 lipoxin A4. The enzyme catalyses 2 leukotriene A4 + O2 + 2 H2O = 2 lipoxin B4. It catalyses the reaction (5Z,8Z,11Z)-eicosatrienoate + O2 = (12S)-hydroperoxy-(5Z,8Z,10E)-eicosatrienoate. It carries out the reaction (8Z,11Z,14Z)-eicosatrienoate + O2 = (12S)-hydroperoxy-(8Z,10E,14Z)-eicosatrienoate. The catalysed reaction is (4Z,7Z,10Z,13Z,16Z,19Z)-docosahexaenoate + O2 = (14S)-hydroperoxy-(4Z,7Z,10Z,12E,16Z,19Z)-docosahexaenoate. The enzyme catalyses (7S)-hydroperoxy-(4Z,8E,10Z,13Z,16Z,19Z)-docosahexaenoate + O2 = (7S,14S)-dihydroperoxy-(4Z,8E,10Z,12E,16Z,19Z)-docosahexaenoate. It catalyses the reaction (7S)-hydroperoxy-(4Z,8E,10Z,13Z,16Z,19Z)-docosahexaenoate + O2 = (7S,17S)-dihydroperoxy-(4Z,8E,10Z,13Z,15E,19Z)-docosahexaenoate. It carries out the reaction (14R,15S)-epoxy-(5Z,8Z,11Z)-eicosatrienoate + O2 = (12S)-hydroperoxy-(14R,15S)-epoxy-(5Z,8Z,10E)-eicosatrienoate. The catalysed reaction is (14S,15R)-epoxy-(5Z,8Z,11Z)-eicosatrienoate + O2 = (12S)-hydroperoxy-(14S,15R)-epoxy-(5Z,8Z,10E)-eicosatrienoate. The enzyme catalyses (5Z,8Z,11Z,14Z)-eicosatetraenoate + O2 = (15S)-hydroperoxy-(5Z,8Z,11Z,13E)-eicosatetraenoate. It catalyses the reaction (14S)-hydroperoxy-(4Z,7Z,10Z,12E,16Z,19Z)-docosahexaenoate = (13S,14S)-epoxy-(4Z,7Z,9E,11E,16Z,19Z)-docosahexaenoate + H2O. It carries out the reaction N-(5Z,8Z,11Z,14Z)-eicosatetraenoyl-L-alanine + O2 = N-(15S)-hydroperoxy-(5Z,8Z,11Z,13E)-eicosatetraenoyl-alanine. The catalysed reaction is N-(5Z,8Z,11Z,14Z)-eicosatetraenoyl-L-alanine + O2 = N-(12S)-hydroperoxy-(5Z,8Z,10E,14Z)-eicosatetraenoyl-alanine. The enzyme catalyses N-(5Z,8Z,11Z,14Z)-eicosatetraenoyl-gamma-aminobutanoate + O2 = N-(15S)-hydroperoxy-(5Z,8Z,11Z,13E)-eicosatetraenoyl-gamma-aminobutanoate. It catalyses the reaction N-(5Z,8Z,11Z,14Z)-eicosatetraenoyl-gamma-aminobutanoate + O2 = N-(12S)-hydroperoxy-(5Z,8Z,10E,14Z)-eicosatetraenoyl-gamma-aminobutanoate. It carries out the reaction N-(5Z,8Z,11Z,14Z)-eicosatetraenoyl-glycine + O2 = N-(15S)-hydroperoxy-(5Z,8Z,11Z,13E)-eicosatetraenoyl-glycine. The catalysed reaction is N-(5Z,8Z,11Z,14Z)-eicosatetraenoyl-glycine + O2 = N-(12S)-hydroperoxy-(5Z,8Z,10E,14Z)-eicosatetraenoyl-glycine. The enzyme catalyses N-(5Z,8Z,11Z,14Z)-eicosatetraenoyl-taurine + O2 = N-(12S)-hydroperoxy-(5Z,8Z,10E,14Z)-eicosatetraenoyl-taurine. It catalyses the reaction N-(5Z,8Z,11Z,14Z)-eicosatetraenoyl-taurine + O2 = N-(15S)-hydroperoxy-(5Z,8Z,11Z,13E)-eicosatetraenoyl-taurine. It carries out the reaction (5Z,8Z,11Z,14Z,17Z)-eicosapentaenoate + O2 = (12S)-hydroperoxy-(5Z,8Z,10E,14Z,17Z)-eicosapentaenoate. It participates in lipid metabolism; hydroperoxy eicosatetraenoic acid biosynthesis. Its activity is regulated as follows. Activated by EGF. Arachidonic acid conversion is inhibited by (13S,14S)-epoxy-(4Z,7Z,9E,11E,16Z,19Z)-docosahexaenoate (13S,14S-epoxy-DHA). Arachidonate 12-lipoxygenase activity is decreased when PH decreases from 7.4 to 6. In terms of biological role, catalyzes the regio and stereo-specific incorporation of molecular oxygen into free and esterified polyunsaturated fatty acids generating lipid hydroperoxides that can be further reduced to the corresponding hydroxy species. Mainly converts arachidonate ((5Z,8Z,11Z,14Z)-eicosatetraenoate) to the specific bioactive lipid (12S)-hydroperoxyeicosatetraenoate/(12S)-HPETE. Through the production of bioactive lipids like (12S)-HPETE it regulates different biological processes including platelet activation. It can also catalyze the epoxidation of double bonds of polyunsaturated fatty acids such as (14S)-hydroperoxy-docosahexaenoate/(14S)-HPDHA resulting in the formation of (13S,14S)-epoxy-DHA. Furthermore, it may participate in the sequential oxidations of DHA ((4Z,7Z,10Z,13Z,16Z,19Z)-docosahexaenoate) to generate specialized pro-resolving mediators (SPMs) like resolvin D5 ((7S,17S)-diHPDHA) and (7S,14S)-diHPDHA, that actively down-regulate the immune response and have anti-aggregation properties with platelets. An additional function involves a multistep process by which it transforms leukotriene A4/LTA4 into the bioactive lipids lipoxin A4/LXA4 and lipoxin B4/LXB4, both are vasoactive and LXA4 may regulate neutrophil function via occupancy of specific recognition sites. Can also peroxidize linoleate ((9Z,12Z)-octadecadienoate) to (13S)-hydroperoxyoctadecadienoate/ (13S-HPODE). Due to its role in regulating both the expression of the vascular endothelial growth factor (VEGF, an angiogenic factor involved in the survival and metastasis of solid tumors) and the expression of integrin beta-1 (known to affect tumor cell migration and proliferation), it can be regarded as protumorigenic. Important for cell survival, as it may play a role not only in proliferation but also in the prevention of apoptosis in vascular smooth muscle cells. The polypeptide is Polyunsaturated fatty acid lipoxygenase ALOX12 (Alox12) (Mus musculus (Mouse)).